The chain runs to 245 residues: Terpene cyclase esdpB (245 aa).

Transmembrane regions (helical) follow at residues 19-39, 48-68, 75-95, 112-132, 140-160, 177-197, and 208-228; these read MVAS…VTTI, SGVT…FAVI, IAAL…YVSV, LPVV…ALSM, LYWG…GLLI, FIAS…WPSA, and WLSG…YHIS.

It belongs to the paxB family.

It localises to the membrane. The protein operates within secondary metabolite biosynthesis; terpenoid biosynthesis. Functionally, terpene cyclase; part of the cluster that mediates the biosynthesis of shearones, diterpenoid pyrones (DPs) which are structurally diverse meroterpenoids consisting of a diterpene linked by a pyrone, and which may exhibit a range of bioactivities. Within the pathway, esdpB takes part to the biosynthesis of the molecular scaffold by catalyzing the cyclization of the prenyl group initiated by protonation and ring-opening of the epoxide to produce the diterpenoid pyrone scaffold. The molecular scaffold is commonly biosynthesized by a series of enzymes including the non-reducing polyketide synthase (NR-PKS) esdpA that generates an alpha-pyrone; the prenyltransferase esdpC that attaches a geranylgeranyl pyrophosphate (GGPP) produced by the GGPP synthase (GGPPS) esdpD onto the pyrone unit; the FAD-dependent monooxygenase esdpE that converts an olefin on the diterpene unit into an epoxide; and the terpene cyclase esdpB that catalyzes the cyclization reactions to give the molecular backbone shearone A. In the modification steps, esdpF oxidizes the hydroxy group to a ketone at C-3 and esdpG then attaches hydroxy groups at both C-11 and C-12. After that, esdpI hydroxylates at C-20 and esdpH hydroxylates at C-6'. The ether bridge is generated by nucleophilic attack of the hydroxy group at C-20 to the carbonyl carbon at C-3. EsdpH can also functions prior to esdpI. The different combinations of these modification enzymes lead to the production of diverse shearone derivatives, shearone I being the end product of the pathway. The alpha-ketoglutarate-dependent dioxygenase esdpJ seems not to be involved in this pathway. The polypeptide is Terpene cyclase esdpB (Penicillium shearii (Eupenicillium shearii)).